A 320-amino-acid polypeptide reads, in one-letter code: Cytochrome f (320 aa).

Positions 1–35 (MQNRNTFSWVKEQMTRFISVSIMIYVITRTSISNA) are cleaved as a signal peptide. Heme is bound by residues Tyr36, Cys56, Cys59, and His60. A helical transmembrane segment spans residues 286–306 (VQGLLFFLASVILAQIFLVLK).

It belongs to the cytochrome f family. As to quaternary structure, the 4 large subunits of the cytochrome b6-f complex are cytochrome b6, subunit IV (17 kDa polypeptide, petD), cytochrome f and the Rieske protein, while the 4 small subunits are PetG, PetL, PetM and PetN. The complex functions as a dimer. Heme serves as cofactor.

The protein resides in the plastid. It is found in the chloroplast thylakoid membrane. Its function is as follows. Component of the cytochrome b6-f complex, which mediates electron transfer between photosystem II (PSII) and photosystem I (PSI), cyclic electron flow around PSI, and state transitions. In Liriodendron tulipifera (Tuliptree), this protein is Cytochrome f.